A 322-amino-acid polypeptide reads, in one-letter code: Homoserine kinase (322 aa).

Pro-107–Ala-117 provides a ligand contact to ATP.

The protein belongs to the GHMP kinase family. Homoserine kinase subfamily.

The protein resides in the cytoplasm. The catalysed reaction is L-homoserine + ATP = O-phospho-L-homoserine + ADP + H(+). It functions in the pathway amino-acid biosynthesis; L-threonine biosynthesis; L-threonine from L-aspartate: step 4/5. Functionally, catalyzes the ATP-dependent phosphorylation of L-homoserine to L-homoserine phosphate. This chain is Homoserine kinase, found in Xylella fastidiosa (strain M23).